A 564-amino-acid polypeptide reads, in one-letter code: Alpha-amylase 3 (564 aa).

The signal sequence occupies residues 1–21 (MFGVYFVLLFLSSALIHVANA). A disulfide bond links C51 and C59. Substrate contacts are provided by N56 and W105. N143 lines the Ca(2+) pocket. The cysteines at positions 172 and 188 are disulfide-linked. A glycan (N-linked (GlcNAc...) asparagine) is linked at N181. D198 is a Ca(2+) binding site. R227 serves as a coordination point for substrate. D229 provides a ligand contact to Ca(2+). The active-site Nucleophile is the D229. 232-233 (KM) contacts substrate. N-linked (GlcNAc...) asparagine glycosylation is present at N235. Residue E253 coordinates Ca(2+). Residue E253 is the Proton donor of the active site. Cysteines 263 and 306 form a disulfide. Residues N282 and N305 are each glycosylated (N-linked (GlcNAc...) asparagine). Residues D322 and R369 each contribute to the substrate site. N-linked (GlcNAc...) asparagine glycosylation is found at N438, N447, and N498. A lipid anchor (GPI-anchor amidated serine) is attached at S538. Residues 539–564 (SSRLILSFKTLVFGLGVTAMLFVLFF) constitute a propeptide, removed in mature form.

This sequence belongs to the glycosyl hydrolase 13 family. Requires Ca(2+) as cofactor. N-glycosylated.

The protein resides in the cell membrane. The enzyme catalyses Endohydrolysis of (1-&gt;4)-alpha-D-glucosidic linkages in polysaccharides containing three or more (1-&gt;4)-alpha-linked D-glucose units.. Functionally, has a role in cell wall biosynthesis where it is involved in maintaining cell wall strength and shape. The polypeptide is Alpha-amylase 3 (aah3) (Schizosaccharomyces pombe (strain 972 / ATCC 24843) (Fission yeast)).